The sequence spans 684 residues: DNA ligase (684 aa).

Residues 34 to 38 (DYDFD), 83 to 84 (SL), and E117 each bind NAD(+). The active-site N6-AMP-lysine intermediate is the K119. R140, E188, K301, and K325 together coordinate NAD(+). C419, C422, C437, and C443 together coordinate Zn(2+). A BRCT domain is found at 602–684 (DAPQTFAGMT…QTMLAAESGD (83 aa)).

It belongs to the NAD-dependent DNA ligase family. LigA subfamily. Requires Mg(2+) as cofactor. The cofactor is Mn(2+).

It catalyses the reaction NAD(+) + (deoxyribonucleotide)n-3'-hydroxyl + 5'-phospho-(deoxyribonucleotide)m = (deoxyribonucleotide)n+m + AMP + beta-nicotinamide D-nucleotide.. In terms of biological role, DNA ligase that catalyzes the formation of phosphodiester linkages between 5'-phosphoryl and 3'-hydroxyl groups in double-stranded DNA using NAD as a coenzyme and as the energy source for the reaction. It is essential for DNA replication and repair of damaged DNA. This chain is DNA ligase, found in Chloroherpeton thalassium (strain ATCC 35110 / GB-78).